The sequence spans 108 residues: Putative transmembrane protein ORF108 (108 aa).

3 helical membrane passes run 11-31 (FIMG…SSII), 33-53 (IAMT…TVHF), and 69-89 (VGFL…LLII).

The protein localises to the host membrane. The chain is Putative transmembrane protein ORF108 from Acidianus hospitalis (AFV-1).